The chain runs to 79 residues: Hematopoietic cell signal transducer (79 aa).

A signal peptide spans M1–S18. The Extracellular portion of the chain corresponds to Q19–L35. The helical transmembrane segment at L36–V56 threads the bilayer. Topologically, residues C57 to G79 are cytoplasmic. Phosphotyrosine is present on Y72. The tract at residues Y72–N74 is GRB2 binding site. A PIK3R1 binding site region spans residues Y72–M75.

The protein belongs to the DAP10 family. Homodimer; Disulfide-linked. Heterohexamer composed of four subunits of HCST/DAP10 and two subunits of KLRK1. Interacts (via transmembrane domain) with KLRK1 (via transmembrane domain); the interaction is required for KLRK1 NK cell surface and induces NK cell-mediated cytotoxicity. Interacts with PIK3R1 and GRB2. Interacts with CLEC5A. Forms an CLEC5A/TYROBP/HCST trimolecular complex depending almost solely on TYROBP. Interacts with CD300H. Post-translationally, phosphorylated; PIK3R1 and GRB2 associate specifically with tyrosine-phosphorylated HCST. O-glycosylated.

Its subcellular location is the membrane. Functionally, transmembrane adapter protein which associates with KLRK1 to form an activation receptor KLRK1-HCST in lymphoid and myeloid cells; this receptor plays a major role in triggering cytotoxicity against target cells expressing cell surface ligands such as MHC class I chain-related MICA and MICB, and UL16-binding proteins (ULBPs); these ligands are up-regulated by stress conditions and pathological state such as viral infection and tumor transformation. Functions as a docking site for PI3-kinase PIK3R1 and GRB2. Interaction of ULBPs with KLRK1-HCST triggers calcium mobilization and activation of the PIK3R1, MAP2K/ERK, and JAK2/STAT5 signaling pathways. Both PIK3R1 and GRB2 are required for full KLRK1-HCST-mediated activation and ultimate killing of target cells. In NK cells, KLRK1-HCST signaling directly induces cytotoxicity and enhances cytokine production initiated via DAP12/TYROBP-associated receptors. In T-cells, it provides primarily costimulation for TCR-induced signals. KLRK1-HCST receptor plays a role in immune surveillance against tumors and is required for cytolysis of tumors cells; indeed, melanoma cells that do not express KLRK1 ligands escape from immune surveillance mediated by NK cells. The sequence is that of Hematopoietic cell signal transducer (Hcst) from Rattus norvegicus (Rat).